The following is a 189-amino-acid chain: UPF0301 protein PputGB1_5045 (189 aa).

The protein belongs to the UPF0301 (AlgH) family.

The polypeptide is UPF0301 protein PputGB1_5045 (Pseudomonas putida (strain GB-1)).